A 148-amino-acid chain; its full sequence is Proteasome chaperone 4 (148 aa).

It belongs to the PSMG4 family. As to quaternary structure, component of the 20S proteasome chaperone. Forms a heterodimer with IRC25 that binds to proteasome precursors. Interacts with POP2.

Its subcellular location is the cytoplasm. Functionally, involved in 20S proteasome assembly, facilitating the alpha-ring formation. Involved in maintenance of telomere length. This Saccharomyces cerevisiae (strain ATCC 204508 / S288c) (Baker's yeast) protein is Proteasome chaperone 4 (POC4).